The chain runs to 526 residues: Nucleobase-ascorbate transporter 4 (526 aa).

The next 12 membrane-spanning stretches (helical) occupy residues 42-62 (IVML…MGGG), 69-89 (VINT…LFGS), 91-111 (LPVV…ITFS), 131-151 (IQGA…FGLW), 157-177 (FLSP…LLAF), 186-206 (IEIG…LPHL), 217-237 (FAVL…TAAG), 282-302 (AFAM…SFIA), 359-381 (RVVQ…GAVL), 388-410 (IFAA…LLQF), 420-440 (FILG…TEYL), and 457-477 (VIMQ…AFLL).

Belongs to the nucleobase:cation symporter-2 (NCS2) (TC 2.A.40) family. As to expression, highly expressed in the root central cylinder. Expressed in the filaments and stigmatic papillae of pollinated flowers and developing siliques.

It localises to the membrane. The polypeptide is Nucleobase-ascorbate transporter 4 (NAT4) (Arabidopsis thaliana (Mouse-ear cress)).